Here is a 44-residue protein sequence, read N- to C-terminus: Protein non-structural 7b (44 aa).

Residues 9 to 29 form a helical membrane-spanning segment; that stretch reads FYLCFLAFLLFLVLIMLIIFW.

The protein localises to the host membrane. This Homo sapiens (Human) protein is Protein non-structural 7b.